Reading from the N-terminus, the 239-residue chain is Phosphoribosylaminoimidazole-succinocarboxamide synthase (239 aa).

This sequence belongs to the SAICAR synthetase family.

The catalysed reaction is 5-amino-1-(5-phospho-D-ribosyl)imidazole-4-carboxylate + L-aspartate + ATP = (2S)-2-[5-amino-1-(5-phospho-beta-D-ribosyl)imidazole-4-carboxamido]succinate + ADP + phosphate + 2 H(+). It participates in purine metabolism; IMP biosynthesis via de novo pathway; 5-amino-1-(5-phospho-D-ribosyl)imidazole-4-carboxamide from 5-amino-1-(5-phospho-D-ribosyl)imidazole-4-carboxylate: step 1/2. The sequence is that of Phosphoribosylaminoimidazole-succinocarboxamide synthase from Acinetobacter baumannii (strain AB307-0294).